The following is a 131-amino-acid chain: MSMHDPIADMLTRIRNGQQAKHQQVTLVSSKLKEEIARVLKEEGYIQDFFIETLPNGLKSITLKLKYYHGRPVIEFIKRISRPGLRVYKSYKDLHSIPGFGVAILSTSKGIMTHVSAKVKGVGGEVICEVA.

This sequence belongs to the universal ribosomal protein uS8 family. Part of the 30S ribosomal subunit. Contacts proteins S5 and S12.

Functionally, one of the primary rRNA binding proteins, it binds directly to 16S rRNA central domain where it helps coordinate assembly of the platform of the 30S subunit. This is Small ribosomal subunit protein uS8 from Legionella pneumophila subsp. pneumophila (strain Philadelphia 1 / ATCC 33152 / DSM 7513).